We begin with the raw amino-acid sequence, 339 residues long: ATP-dependent 6-phosphofructokinase (339 aa).

Residues glycine 11, 72–73 (RY), and 102–105 (GDGS) each bind ATP. Aspartate 103 provides a ligand contact to Mg(2+). Residues 125 to 127 (TID), arginine 162, and 169 to 171 (MGR) contribute to the substrate site. The Proton acceptor role is filled by aspartate 127. ADP is bound by residues 185–187 (GAD) and 214–216 (KSH). Substrate is bound by residues glutamate 223, arginine 245, and 251–254 (HVIR).

The protein belongs to the phosphofructokinase type A (PFKA) family. ATP-dependent PFK group I subfamily. Prokaryotic clade 'B1' sub-subfamily. In terms of assembly, homotetramer. It depends on Mg(2+) as a cofactor.

Its subcellular location is the cytoplasm. The catalysed reaction is beta-D-fructose 6-phosphate + ATP = beta-D-fructose 1,6-bisphosphate + ADP + H(+). Its pathway is carbohydrate degradation; glycolysis; D-glyceraldehyde 3-phosphate and glycerone phosphate from D-glucose: step 3/4. Its activity is regulated as follows. Allosterically activated by ADP and other diphosphonucleosides, and allosterically inhibited by phosphoenolpyruvate. Catalyzes the phosphorylation of D-fructose 6-phosphate to fructose 1,6-bisphosphate by ATP, the first committing step of glycolysis. This chain is ATP-dependent 6-phosphofructokinase, found in Streptococcus thermophilus (strain ATCC BAA-491 / LMD-9).